The sequence spans 384 residues: Mitogen-activated protein kinase 8 (384 aa).

Residues 26-321 (YQNLRPIGSG…VDEALQHPYI (296 aa)) form the Protein kinase domain. ATP is bound by residues 33–38 (GSGAQG) and K55. The active-site Proton acceptor is the D151. A Phosphothreonine modification is found at T183. Residues 183–185 (TPY) carry the TXY motif. A Phosphotyrosine modification is found at Y185.

It belongs to the protein kinase superfamily. CMGC Ser/Thr protein kinase family. MAP kinase subfamily. The cofactor is Mg(2+). Post-translationally, dually phosphorylated on Thr-183 and Tyr-185, which activates the enzyme.

It localises to the cytoplasm. Its subcellular location is the nucleus. The protein resides in the synapse. It carries out the reaction L-seryl-[protein] + ATP = O-phospho-L-seryl-[protein] + ADP + H(+). The enzyme catalyses L-threonyl-[protein] + ATP = O-phospho-L-threonyl-[protein] + ADP + H(+). With respect to regulation, activated by threonine and tyrosine phosphorylation. Its function is as follows. Responds to activation by environmental stress and pro-inflammatory cytokines by phosphorylating a number of transcription factors, primarily components of AP-1 such as c-Jun and ATF2 and thus regulates AP-1 transcriptional activity. May play a role in the regulation of the circadian clock. The polypeptide is Mitogen-activated protein kinase 8 (mapk8) (Danio rerio (Zebrafish)).